The primary structure comprises 162 residues: UPF0305 protein MmarC6_0221 (162 aa).

Belongs to the UPF0305 family.

This is UPF0305 protein MmarC6_0221 from Methanococcus maripaludis (strain C6 / ATCC BAA-1332).